The sequence spans 293 residues: uncharacterized protein (293 aa).

Residues 1–58 (MDLRRFITLKTVVEEGSFLRASQKLCCTQSTVTFHIQQLEQEFSVQLFEKIGRRMCLT) enclose the HTH lysR-type domain. A DNA-binding region (H-T-H motif) is located at residues 18–37 (FLRASQKLCCTQSTVTFHIQ).

It belongs to the LysR transcriptional regulatory family.

This is an uncharacterized protein from Escherichia coli (strain K12).